Consider the following 809-residue polypeptide: Sucrose synthase 2 (809 aa).

Positions 278-756 (MVFNVVILSP…GLQRIYERYT (479 aa)) are GT-B glycosyltransferase.

This sequence belongs to the glycosyltransferase 1 family. Plant sucrose synthase subfamily.

The enzyme catalyses an NDP-alpha-D-glucose + D-fructose = a ribonucleoside 5'-diphosphate + sucrose + H(+). Sucrose-cleaving enzyme that provides UDP-glucose and fructose for various metabolic pathways. The chain is Sucrose synthase 2 (SUS2) from Pisum sativum (Garden pea).